Consider the following 443-residue polypeptide: ATP-dependent protease ATPase subunit HslU (443 aa).

ATP-binding positions include Ile-18, 60–65 (GVGKTE), Asp-256, Glu-321, and Arg-393.

Belongs to the ClpX chaperone family. HslU subfamily. In terms of assembly, a double ring-shaped homohexamer of HslV is capped on each side by a ring-shaped HslU homohexamer. The assembly of the HslU/HslV complex is dependent on binding of ATP.

It is found in the cytoplasm. In terms of biological role, ATPase subunit of a proteasome-like degradation complex; this subunit has chaperone activity. The binding of ATP and its subsequent hydrolysis by HslU are essential for unfolding of protein substrates subsequently hydrolyzed by HslV. HslU recognizes the N-terminal part of its protein substrates and unfolds these before they are guided to HslV for hydrolysis. This Escherichia coli O157:H7 (strain EC4115 / EHEC) protein is ATP-dependent protease ATPase subunit HslU.